The following is a 341-amino-acid chain: Long-chain acyl-[acyl-carrier-protein] reductase (341 aa).

This sequence belongs to the short-chain dehydrogenases/reductases (SDR) family. Requires a divalent metal cation as cofactor.

It carries out the reaction a long-chain fatty aldehyde + holo-[ACP] + NADP(+) = a long-chain fatty acyl-[ACP] + NADPH + H(+). It catalyses the reaction a long-chain fatty aldehyde + holo-[ACP] + NAD(+) = a long-chain fatty acyl-[ACP] + NADH + H(+). Its function is as follows. Catalyzes the NADP-dependent reduction of long-chain acyl-ACP to the corresponding fatty aldehyde. Involved in the biosynthesis of alkanes, mainly heptadecane and pentadecane, by producing the fatty aldehydes used by aldehyde decarbonylase. The chain is Long-chain acyl-[acyl-carrier-protein] reductase from Synechococcus elongatus (strain ATCC 33912 / PCC 7942 / FACHB-805) (Anacystis nidulans R2).